Here is a 572-residue protein sequence, read N- to C-terminus: Methionine--tRNA ligase (572 aa).

A 'HIGH' region motif is present at residues 11 to 21 (PYINGIKHLGN). Zn(2+)-binding residues include C143, C146, C156, and C159. Residues 346–350 (QFSTS) carry the 'KMSKS' region motif. T349 serves as a coordination point for ATP.

Belongs to the class-I aminoacyl-tRNA synthetase family. MetG type 1 subfamily. In terms of assembly, monomer. Zn(2+) is required as a cofactor.

It localises to the cytoplasm. The catalysed reaction is tRNA(Met) + L-methionine + ATP = L-methionyl-tRNA(Met) + AMP + diphosphate. Its function is as follows. Is required not only for elongation of protein synthesis but also for the initiation of all mRNA translation through initiator tRNA(fMet) aminoacylation. This is Methionine--tRNA ligase from Dinoroseobacter shibae (strain DSM 16493 / NCIMB 14021 / DFL 12).